The chain runs to 292 residues: Protein LRATD1 (292 aa).

Position 38 is a phosphoserine (S38). The LRAT domain maps to 133–228 (PATEQPAPAP…CRFGKREFKA (96 aa)).

The protein belongs to the LRATD family.

It localises to the cytoplasm. In terms of biological role, may play a role in cell morphology and motility. This chain is Protein LRATD1, found in Mus musculus (Mouse).